The following is a 301-amino-acid chain: Recombination-associated protein RdgC (301 aa).

It belongs to the RdgC family.

Its subcellular location is the cytoplasm. It is found in the nucleoid. May be involved in recombination. In Pseudoalteromonas atlantica (strain T6c / ATCC BAA-1087), this protein is Recombination-associated protein RdgC.